The sequence spans 1728 residues: MATVLHSESRRLYSWWWDSHIPKNSKWIQQNLSDMDSKVKAMIKLIEEDADSFARRAEMYYKKRPELMKLVEEFYRAYRALAERYDHATVELCHAHKTMAEAFPNQVPFDMIEDSASSSCSEPRTPEKMPPGIQPFYDSDSATSKRGLSQLTEYLGNSETEVESLKRTLVELGAEKEALNLQYQLSLNKFSRLEKDLEVAQKDVSGLDERASKAEIETKILAEALAKLEAERDAALLRYNESMQKITELEESFSHAQEDVKGLTNRATKAETEVENLKQAHSRLHSEKEAGLAEYNRCLEMISNLEKKVRDAEENAQNFSNQSAKAEDEIKALRHELVKVNEVKDGLRLRYQQCLETISKLEREVSHAQDNAKRLSSEVLAGAAKLKTVEDQCTLLESSNETLKLEADGLTHKLAAKDQEIFQKQNELEKFQSLIEDEHSRYLEIEVSLKTLQSLYSQSQEEQKVITSELQSRIGMLRDLETRNLKLEGDISSVKEENQNLSELNDSSMIFLETQKCEISSLKEIKEKLEEEVARHINQSSAFQEEIRRLKDEIDSLNKRYQAIMEQVNLAGLDPKSLACSVRKLQDENSKLTELCNHQSDDKDALTEKLRELDNILRKNVCLEKLLLESNTKLDGSREKTKDLQERCESLRGEKYEFIAERANLLSQLQIMTENMQKLLEKNSLLETSLSGANIELQCVKEKSKCFEEFFQLLKNDKAELIKERESLISQLNAVKEKLGVLEKKFTELEGKYADLQREKQFKNLQVEELRVSLATEKQERASYERSTDTRLADLQNNVSFLREECRSRKKEFEEELDRAVNAQVEIFILQKFIEDLEQKNFSLLIECQKYAEASSFSEKLIAELESENLEQQMEAEFLVHEIDNFRGAICQVFKALQVEADCKTADQKIAKERIPVSRVLGEINELKCSLSSAEYETQRLVIENSVLLSLLGQFQSDGMKLESEKRDVEKDLETIVHHYGMLKKDRLELLEMNRQLKSELIDREQRELELKAELQTEHLKFENLHESYMALHQDYSDALGKNKSLHLKFSELKGEICILEEENGAILEEAIALNNVSVVYQSLGSEKAEQAEAFAKNLNSLQNINSGLKQKVETLEEILKGKEVDSQELNSKLEKLQESLEEANELNDLLEHQILVKEETLRQKAIELLEAEEMLKATHNANAELCEAVEELRKDCKESRKLKGNLEKRNSELCDLAGRQDEEIKILSNLKENLESEVKLLHKEIQEHRVREEFLSSELQEKSNEFGLWDAEATSFYFDLQISAVREVLLENKVQELTGVCENLKDEAVTKTTEINQIKETVGFLEFEVSELKTQLSAYDPVVASLAEDVRSLEQNALSLMKLPVPAGRRREGVQNDEHQEAAVSQEPVGHCSTNLDNGIVLLQDMKTRIKTIKQAVAEEKKRRGKLRRRSSSHRSKDRKLFEEIELEDQFSGEIRQPRSPAMTESKNGSLMKDIPLDQVADTTSYGRSRRTSRGSSDQMLELWEEAAEPESSIKFLINNKNSKKPLIPRLHRRSRNPSVESQSEKMVGVVDKLELSRSTEDNAKILERLLSDSRRLASLRISLRDLKSKLEINEKPGKFTNPDFARVRKQMKEMEEAIFQLANTNEILSNEIEETGDVRDIYRKVVMEKSRIGSEKIEQMQQEMQNIERTVLKLEEGATKSKGRRKFSESRTVILLRDIIHKGGKRTARKKKNRFCGCMRSSGNEE.

In terms of domain architecture, NAB spans Y13 to L92. 7 coiled-coil regions span residues L155–E446, M476–I827, F857–N885, Q954–Q1016, E1090–V1323, L1403–R1431, and R1576–K1684. Residues A1419–K1441 are disordered. A compositionally biased stretch (basic residues) spans R1424–D1439.

Belongs to the NET family. In terms of assembly, interacts with F-actin. In terms of tissue distribution, expressed in root meristems and at very low levels throughout mature vasculature.

It is found in the cytoplasm. It localises to the cytoskeleton. Its subcellular location is the cell membrane. The protein localises to the cell junction. The protein resides in the plasmodesma. Plant-specific actin binding protein. Associates with F-actin at the plasma membrane and plasmodesmata. May be part of a membrane-cytoskeletal adapter complex. The chain is Protein NETWORKED 1A from Arabidopsis thaliana (Mouse-ear cress).